The sequence spans 199 residues: MSSAPIGILGGTFDPIHYGHLAIAEEVRVALRLDRVLIIPAGEQPLKIGKHMAPPEHRLAMARLACADNPFFEVSSIEIDRPGPSYTHVTLQLLHDQGLENLYLILGADALADLPRWRETPRILTLARIVVVSRPGAAIDLPALAEMFPALPERLILIEGPRLDISSTDLRQRVAQGRPIRYQTPDAVVAYIEAHGLYR.

The protein belongs to the NadD family.

The catalysed reaction is nicotinate beta-D-ribonucleotide + ATP + H(+) = deamido-NAD(+) + diphosphate. It participates in cofactor biosynthesis; NAD(+) biosynthesis; deamido-NAD(+) from nicotinate D-ribonucleotide: step 1/1. Its function is as follows. Catalyzes the reversible adenylation of nicotinate mononucleotide (NaMN) to nicotinic acid adenine dinucleotide (NaAD). This chain is Probable nicotinate-nucleotide adenylyltransferase, found in Roseiflexus sp. (strain RS-1).